We begin with the raw amino-acid sequence, 953 residues long: Serine/threonine-protein kinase ppk30 (953 aa).

Residues 57–326 (VIIQRYLSEG…IYQTLKEIME (270 aa)) enclose the Protein kinase domain. ATP contacts are provided by residues 63–71 (LSEGGFSHV) and lysine 85. Aspartate 187 serves as the catalytic Proton acceptor. Disordered stretches follow at residues 343 to 402 (ASTY…PSVS), 427 to 451 (SPIPATKSYSATIQTPRSPSLRRAD), 538 to 606 (RFLP…NRMN), 641 to 669 (RKEPFTPAVPSAKSGLKKDQSSEVANKDV), 748 to 791 (STSQ…RPIG), and 864 to 953 (RKSC…ESLE). 3 stretches are compositionally biased toward polar residues: residues 355 to 369 (RTPSGSLTPLSSRPA), 378 to 402 (TVQTTSSNVPPVNRPSLKSKSPSVS), and 433 to 444 (KSYSATIQTPRS). Residues 547 to 557 (PSEFSSSVGSK) are compositionally biased toward low complexity. The span at 558-575 (QNLSMDIPSVQNVSTKQK) shows a compositional bias: polar residues. Over residues 656-669 (LKKDQSSEVANKDV) the composition is skewed to basic and acidic residues. Positions 748 to 766 (STSQVSHTQRLQQSISTSL) are enriched in polar residues. Basic and acidic residues-rich tracts occupy residues 767-778 (ERVKSNTKKESN), 865-884 (KSCETQRSRKSHEGSNDLER), and 937-953 (PHIERLNLFHTKSESLE). Phosphoserine is present on residues serine 872 and serine 875.

It belongs to the protein kinase superfamily. Ser/Thr protein kinase family.

It is found in the cytoplasm. It carries out the reaction L-seryl-[protein] + ATP = O-phospho-L-seryl-[protein] + ADP + H(+). The enzyme catalyses L-threonyl-[protein] + ATP = O-phospho-L-threonyl-[protein] + ADP + H(+). The sequence is that of Serine/threonine-protein kinase ppk30 (ppk30) from Schizosaccharomyces pombe (strain 972 / ATCC 24843) (Fission yeast).